Reading from the N-terminus, the 360-residue chain is UPF0284 protein APE_2029.1 (360 aa).

It belongs to the UPF0284 family.

The sequence is that of UPF0284 protein APE_2029.1 from Aeropyrum pernix (strain ATCC 700893 / DSM 11879 / JCM 9820 / NBRC 100138 / K1).